A 313-amino-acid polypeptide reads, in one-letter code: Ankyrin repeat family A protein 2 (313 aa).

ANK repeat units lie at residues 148–180 (ANSLSVHQLAAQGEMLYLATRIEQENVINHTDE), 181–213 (EGFTPLMWAAAHGQIAVVEFLLQNGADPQLLGK), 214–246 (GRESALSLACSKGYTDIVKMLLDCGVDVNEYDW), 247–279 (NGGTPLLYAVHGNHVKCVKMLLESGADPTIETD), and 280–313 (SGYNSMDLAVALGYRSVQQVIESHLLKLLQNIKE).

Interacts (via ANK repeats) with CCDC8 (via PxLPxI/L motif); mediates the interaction with the 3M complex which is composed of CCDC8, CUL7 and OBSL1. Interacts (via ANK repeats) with HDAC4 (via PxLPxI/L motif). Interacts (via ANK repeats) with HDAC5 (via PxLPxI/L motif). Interacts (via ANK repeats) with LRP2/megalin (via PxLPxI/L motif). Interacts (via ANK repeats) with RFX7 (via PxLPxI/L motif). Interacts with AHRR. Interacts with NEK6.

Its subcellular location is the cytoplasm. The protein localises to the cytoskeleton. It is found in the membrane. Its function is as follows. May regulate the interaction between the 3M complex and the histone deacetylases HDAC4 and HDAC5. May also regulate LRP2/megalin. This Homo sapiens (Human) protein is Ankyrin repeat family A protein 2 (ANKRA2).